Here is a 91-residue protein sequence, read N- to C-terminus: Small ribosomal subunit protein uS15 (91 aa).

This sequence belongs to the universal ribosomal protein uS15 family. As to quaternary structure, part of the 30S ribosomal subunit. Forms a bridge to the 50S subunit in the 70S ribosome, contacting the 23S rRNA.

In terms of biological role, one of the primary rRNA binding proteins, it binds directly to 16S rRNA where it helps nucleate assembly of the platform of the 30S subunit by binding and bridging several RNA helices of the 16S rRNA. Forms an intersubunit bridge (bridge B4) with the 23S rRNA of the 50S subunit in the ribosome. This is Small ribosomal subunit protein uS15 from Legionella pneumophila (strain Corby).